The following is a 405-amino-acid chain: Accessory Sec system protein translocase subunit SecY2 (405 aa).

10 consecutive transmembrane segments (helical) span residues 14-34 (MCTL…LPFV), 65-85 (LFSI…MFSF), 104-124 (MYLT…NLPV), 131-151 (FLVF…LVWL), 156-176 (ATIG…ASLP), 190-210 (LGLL…VVLF), 243-263 (GMPY…LLLL), 285-305 (PLWI…FAFV), 343-363 (FALI…LFVL), and 368-388 (LLKV…LFTI).

Belongs to the SecY/SEC61-alpha family. SecY2 subfamily. In terms of assembly, component of the accessory SecA2/SecY2 protein translocase complex required to export cell wall proteins. May form heterotrimers with SecE and SecG subunits.

The protein resides in the cell membrane. Its function is as follows. Part of the accessory SecA2/SecY2 system specifically required for export of possible cell wall proteins. The central subunit of a protein translocation channel. This is Accessory Sec system protein translocase subunit SecY2 from Streptococcus oralis (strain Uo5).